Here is a 335-residue protein sequence, read N- to C-terminus: Ketol-acid reductoisomerase (NADP(+)) 2 (335 aa).

In terms of domain architecture, KARI N-terminal Rossmann spans 1-180 (MKTYYEKDAN…GCTRAGVIET (180 aa)). Residues 24-27 (YGSQ), arginine 47, serine 51, and 81-84 (DEQQ) contribute to the NADP(+) site. Histidine 106 is a catalytic residue. Glycine 132 is an NADP(+) binding site. The region spanning 181 to 326 (TFQEETETDL…AELREMMSWI (146 aa)) is the KARI C-terminal knotted domain. Aspartate 189, glutamate 193, glutamate 225, and glutamate 229 together coordinate Mg(2+). Position 250 (serine 250) interacts with substrate.

The protein belongs to the ketol-acid reductoisomerase family. Requires Mg(2+) as cofactor.

It carries out the reaction (2R)-2,3-dihydroxy-3-methylbutanoate + NADP(+) = (2S)-2-acetolactate + NADPH + H(+). The catalysed reaction is (2R,3R)-2,3-dihydroxy-3-methylpentanoate + NADP(+) = (S)-2-ethyl-2-hydroxy-3-oxobutanoate + NADPH + H(+). The protein operates within amino-acid biosynthesis; L-isoleucine biosynthesis; L-isoleucine from 2-oxobutanoate: step 2/4. It functions in the pathway amino-acid biosynthesis; L-valine biosynthesis; L-valine from pyruvate: step 2/4. Functionally, involved in the biosynthesis of branched-chain amino acids (BCAA). Catalyzes an alkyl-migration followed by a ketol-acid reduction of (S)-2-acetolactate (S2AL) to yield (R)-2,3-dihydroxy-isovalerate. In the isomerase reaction, S2AL is rearranged via a Mg-dependent methyl migration to produce 3-hydroxy-3-methyl-2-ketobutyrate (HMKB). In the reductase reaction, this 2-ketoacid undergoes a metal-dependent reduction by NADPH to yield (R)-2,3-dihydroxy-isovalerate. This chain is Ketol-acid reductoisomerase (NADP(+)) 2, found in Bacillus cereus (strain ATCC 10987 / NRS 248).